The sequence spans 257 residues: MVLIRVLANLLILQLSYAQKSSELVVGGHPCNINEHRFLVLVYSDGIQCGGTLINKEWMLTAAHCDGKKMKLQFGLHSKNVPNKDKQTRVPKKKYFFPCSKNFTKWDKDIMLIRLNHPVNNSTHIAPLSLPSKPPSQDTVCNIMGWGTISPTKEIYPDVPHCANINIVDHAVCRAFYPGLLEKSKTLCAGILEGGKDTCQGDSGGPLICNGQIQGIVSVGGDPCAEPRVPALYTKVFDHLDWIKSIIAGNTAATCPL.

An N-terminal signal peptide occupies residues 1 to 18 (MVLIRVLANLLILQLSYA). Residues 19–24 (QKSSEL) constitute a propeptide that is removed on maturation. Residues 25 to 248 (VVGGHPCNIN…HLDWIKSIIA (224 aa)) form the Peptidase S1 domain. Cystine bridges form between Cys-31–Cys-162, Cys-49–Cys-65, Cys-141–Cys-209, Cys-173–Cys-188, and Cys-199–Cys-224. The active-site Charge relay system is the His-64. An N-linked (GlcNAc...) asparagine glycan is attached at Asn-102. Asp-109 functions as the Charge relay system in the catalytic mechanism. N-linked (GlcNAc...) asparagine glycans are attached at residues Asn-120 and Asn-121. Residue Ser-203 is the Charge relay system of the active site.

The protein belongs to the peptidase S1 family. Snake venom subfamily. Monomer. As to expression, expressed by the venom gland.

It localises to the secreted. Functionally, snake venom serine protease that may act in the hemostasis system of the prey. The chain is Snake venom serine protease KN1 from Trimeresurus stejnegeri (Chinese green tree viper).